Consider the following 513-residue polypeptide: Serine/threonine protein phosphatase 2A 55 kDa regulatory subunit B alpha isoform (513 aa).

N-acetylmethionine is present on M1. WD repeat units follow at residues 36 to 75, 112 to 153, 232 to 270, 281 to 321, 340 to 378, and 483 to 513; these read QEVD…NSSG, EIEE…IKKI, AHDY…QSFN, DLSE…LCDS, EIIA…GPVA, and DYTT…MYYA.

It belongs to the phosphatase 2A regulatory subunit B family. As to quaternary structure, PP2A consists of a common heteromeric enzyme, composed of a catalytic subunit (subunits C), a constant regulatory subunit (subunit A), and a variety of regulatory subunits such as subunits B (the R2/B/PR55/B55, R3/B''/PR72/PR130/PR59 and R5/B'/B56 families). Interacts with SIC/RON3. Expressed ubiquitously.

Functionally, the B regulatory subunit may modulate substrate selectivity and catalytic activity, and may also direct the localization of the catalytic enzyme to a particular subcellular compartment. In Arabidopsis thaliana (Mouse-ear cress), this protein is Serine/threonine protein phosphatase 2A 55 kDa regulatory subunit B alpha isoform (PP2AB1).